Here is a 92-residue protein sequence, read N- to C-terminus: Small ribosomal subunit protein uS19 (92 aa).

The interval 73–92 (EFSPSRTYYGHAADKKAKRR) is disordered.

It belongs to the universal ribosomal protein uS19 family.

Protein S19 forms a complex with S13 that binds strongly to the 16S ribosomal RNA. This Maricaulis maris (strain MCS10) (Caulobacter maris) protein is Small ribosomal subunit protein uS19.